Consider the following 383-residue polypeptide: Probable endopolygalacturonase C (383 aa).

The N-terminal stretch at 1–16 (MVRQLILISSLLAAVA) is a signal peptide. The propeptide occupies 17-40 (VRAPADPAHPMVTEAPDVNLVEKR). Cysteine 44 and cysteine 62 form a disulfide bridge. PbH1 repeat units lie at residues 175-206 (STDLTMTDITVDNTDGDTDDLAANTDGFDIGE) and 207-228 (STYITITGAEIYNQDDCVAINS). Aspartate 221 functions as the Proton donor in the catalytic mechanism. Cysteine 223 and cysteine 239 are joined by a disulfide. Histidine 243 is a catalytic residue. PbH1 repeat units lie at residues 253–279 (RDDNTVKNVTFYDVNVLKSQQAIRIKT) and 287–309 (VSEVTYHEIAFSDATDYGIVIEQ). A glycan (N-linked (GlcNAc...) asparagine) is linked at asparagine 260. 2 disulfides stabilise this stretch: cysteine 348/cysteine 353 and cysteine 372/cysteine 381.

This sequence belongs to the glycosyl hydrolase 28 family.

It localises to the secreted. It catalyses the reaction (1,4-alpha-D-galacturonosyl)n+m + H2O = (1,4-alpha-D-galacturonosyl)n + (1,4-alpha-D-galacturonosyl)m.. Involved in maceration and soft-rotting of plant tissue. Hydrolyzes the 1,4-alpha glycosidic bonds of de-esterified pectate in the smooth region of the plant cell wall. The polypeptide is Probable endopolygalacturonase C (pgaC) (Aspergillus niger).